Consider the following 222-residue polypeptide: Cytidylate kinase (222 aa).

Residue 10–18 (GTSSSGKSV) participates in ATP binding.

It belongs to the cytidylate kinase family. Type 1 subfamily.

It localises to the cytoplasm. The enzyme catalyses CMP + ATP = CDP + ADP. It carries out the reaction dCMP + ATP = dCDP + ADP. This chain is Cytidylate kinase, found in Mycoplasma capricolum subsp. capricolum (strain California kid / ATCC 27343 / NCTC 10154).